A 112-amino-acid chain; its full sequence is Nitrogenase-stabilizing/protective protein NifW (112 aa).

The protein belongs to the NifW family. In terms of assembly, homotrimer; associates with NifD.

May protect the nitrogenase Fe-Mo protein from oxidative damage. In Paraburkholderia xenovorans (strain LB400), this protein is Nitrogenase-stabilizing/protective protein NifW.